Here is a 435-residue protein sequence, read N- to C-terminus: Shikimate O-hydroxycinnamoyltransferase (435 aa).

Active-site proton acceptor residues include H153 and D382.

The protein belongs to the plant acyltransferase family. As to expression, highly expressed in stem vascular tissues.

The catalysed reaction is shikimate + 4-coumaroyl-CoA = trans-4-coumaroylshikimate + CoA. Its function is as follows. Acyltransferase involved in the biosynthesis of lignin. The affinity for shikimate as acceptor is 100-fold higher than for quinate. The most efficient donors are caffeoyl-CoA &gt; p-coumaroyl-CoA &gt; feruloyl-CoA &gt;&gt; sinapoyl-CoA. This is Shikimate O-hydroxycinnamoyltransferase (HST) from Nicotiana tabacum (Common tobacco).